Consider the following 171-residue polypeptide: Der GTPase-activating protein YihI (171 aa).

Disordered regions lie at residues 1–99 (MKKP…QAEL) and 145–171 (LSYD…RGGN). Positions 20 to 30 (TREELNQEARD) are enriched in basic and acidic residues. Residues 31 to 40 (RKRLKKHRGH) are compositionally biased toward basic residues. Over residues 147–160 (YDDDDEDDEEDEKQ) the composition is skewed to acidic residues.

It belongs to the YihI family. As to quaternary structure, interacts with Der.

A GTPase-activating protein (GAP) that modifies Der/EngA GTPase function. May play a role in ribosome biogenesis. The polypeptide is Der GTPase-activating protein YihI (Salmonella choleraesuis (strain SC-B67)).